The following is a 260-amino-acid chain: NADH-ubiquinone oxidoreductase chain 6 (260 aa).

Transmembrane regions (helical) follow at residues 2-22 (LTNYLLIIFCFLALFCSFMII), 30-50 (SILYLILVFCNVTFVLIILGV), 52-72 (FIAIIFLIVYVGAIAVLFLFV), 101-121 (FLFQLFTFVFNFSVVEVFGLF), 142-162 (VPSGLLINGIYIFPNLSNLGI), and 211-231 (FFIFLVVSLILLISMIGSIIL).

It belongs to the complex I subunit 6 family.

It localises to the mitochondrion membrane. It carries out the reaction a ubiquinone + NADH + 5 H(+)(in) = a ubiquinol + NAD(+) + 4 H(+)(out). Its function is as follows. Core subunit of the mitochondrial membrane respiratory chain NADH dehydrogenase (Complex I) that is believed to belong to the minimal assembly required for catalysis. Complex I functions in the transfer of electrons from NADH to the respiratory chain. The immediate electron acceptor for the enzyme is believed to be ubiquinone. This is NADH-ubiquinone oxidoreductase chain 6 (ND6) from Acanthamoeba castellanii (Amoeba).